Consider the following 229-residue polypeptide: 5'-methylthioadenosine/S-adenosylhomocysteine nucleosidase (229 aa).

Glutamate 12 functions as the Proton acceptor in the catalytic mechanism. Substrate is bound by residues glycine 78, isoleucine 152, and 173–174 (ME). Aspartate 197 functions as the Proton donor in the catalytic mechanism.

Belongs to the PNP/UDP phosphorylase family. MtnN subfamily.

It carries out the reaction S-adenosyl-L-homocysteine + H2O = S-(5-deoxy-D-ribos-5-yl)-L-homocysteine + adenine. The catalysed reaction is S-methyl-5'-thioadenosine + H2O = 5-(methylsulfanyl)-D-ribose + adenine. The enzyme catalyses 5'-deoxyadenosine + H2O = 5-deoxy-D-ribose + adenine. It functions in the pathway amino-acid biosynthesis; L-methionine biosynthesis via salvage pathway; S-methyl-5-thio-alpha-D-ribose 1-phosphate from S-methyl-5'-thioadenosine (hydrolase route): step 1/2. Its function is as follows. Catalyzes the irreversible cleavage of the glycosidic bond in both 5'-methylthioadenosine (MTA) and S-adenosylhomocysteine (SAH/AdoHcy) to adenine and the corresponding thioribose, 5'-methylthioribose and S-ribosylhomocysteine, respectively. Also cleaves 5'-deoxyadenosine, a toxic by-product of radical S-adenosylmethionine (SAM) enzymes, into 5-deoxyribose and adenine. This chain is 5'-methylthioadenosine/S-adenosylhomocysteine nucleosidase, found in Histophilus somni (strain 2336) (Haemophilus somnus).